The following is a 215-amino-acid chain: Ras-like GTP-binding protein RHO1 (215 aa).

GTP contacts are provided by alanine 30, valine 31, glycine 32, lysine 33, threonine 34, and cysteine 35. Threonine 34 lines the Mg(2+) pocket. 2 consecutive short sequence motifs (switch) follow at residues 43 to 54 (GEIPTAYVPTVF) and 74 to 93 (DTAGQEEYDRLRPLSYADSD). Residue threonine 52 coordinates Mg(2+). Residues aspartate 135 and serine 166 each contribute to the GTP site. The interval 194–215 (VTTQAKSQESTQQKKKSKCLLQ) is disordered. Positions 195–204 (TTQAKSQEST) are enriched in low complexity. Residues 206-215 (QKKKSKCLLQ) show a composition bias toward basic residues. Position 212 is a cysteine methyl ester (cysteine 212). Cysteine 212 is lipidated: S-geranylgeranyl cysteine. Positions 213 to 215 (LLQ) are cleaved as a propeptide — removed in mature form.

Belongs to the small GTPase superfamily. Rho family. As to quaternary structure, interacts (GTP-bound form) with formin1 (via GBD/FH3 domain); the interaction activates formin1. Interacts (GTP-bound form) with profilin1. Interacts (GDP-bound form and when prenylated) with RhoGDI. Mg(2+) is required as a cofactor.

It localises to the cell membrane. Its subcellular location is the cytoplasm. The protein localises to the cytoskeleton. The protein resides in the cell projection. It is found in the phagocytic cup. It localises to the cytoplasmic vesicle. Its subcellular location is the phagosome. It catalyses the reaction GTP + H2O = GDP + phosphate + H(+). With respect to regulation, regulated by guanine nucleotide exchange factors (GEFs) which promote the exchange of bound GDP for free GTP, GTPase activating proteins (GAPs) which increase the GTP hydrolysis activity and GDP dissociation inhibitors which inhibit the dissociation of the nucleotide from the GTPase. Small GTPase which cycles between active GTP-bound and inactive GDP-bound states. Involved in actin cytoskeleton remodeling. Regulates phagocytosis by modulating actin cytoskeleton dynamics through the recruitment of formin1 and profilin1 to the phagocytosis nucleation site. The polypeptide is Ras-like GTP-binding protein RHO1 (Entamoeba histolytica (strain ATCC 30459 / HM-1:IMSS / ABRM)).